A 790-amino-acid polypeptide reads, in one-letter code: Kinesin-like protein KIN-14D (790 aa).

Disordered regions lie at residues 1-56 and 116-139; these read MPLR…DVGS and DKEN…LDAK. The tract at residues 1 to 66 is globular; it reads MPLRNQNRAP…TEECGKVEFT (66 aa). Residues 16 to 33 are compositionally biased toward basic and acidic residues; it reads VKKEALSSIPFDKRRKET. Polar residues predominate over residues 34–55; it reads QGTGRRQVLSTVNRQDANSDVG. Coiled coils occupy residues 117-316 and 347-426; these read KENL…HVVQ and SLEE…LELK. Basic and acidic residues predominate over residues 127–139; sequence AEKRYSDKELDAK. One can recognise a Kinesin motor domain in the interval 428 to 769; sequence NIRVFCRVRP…LRFAARVNAC (342 aa). 513-520 is an ATP binding site; that stretch reads GQTGSGKT.

It belongs to the TRAFAC class myosin-kinesin ATPase superfamily. Kinesin family. KIN-14 subfamily. As to expression, slightly expressed in anther lobes with pollen mother cells at anther stage 5. Strongly expressed at anther stage 6 in the tapetum and meiotic cells. Also detected in the gynoecium and the ovule.

It localises to the cytoplasm. Its subcellular location is the cytoskeleton. The protein resides in the phragmoplast. Its function is as follows. Kinesin that supports microtubule movement in an ATP-dependent manner and that functions as a minus-end directed motor as well as a plus-end tracking protein. During mitosis, is involved in early spindle assembly. Participates in the capture of antiparallel interpolar microtubules and helps in generating force to coalign microtubules. This chain is Kinesin-like protein KIN-14D, found in Arabidopsis thaliana (Mouse-ear cress).